The following is a 179-amino-acid chain: M-zodatoxin-Lt4b (179 aa).

An N-terminal signal peptide occupies residues 1-22 (MKFSIIALALAVAFVCVAESRS). The propeptide occupies 23–43 (EEEGYDVSEEIQAEELEEAAR). Residues 40–43 (EAAR) carry the Processing quadruplet motif 1 motif. Residue Q61 is modified to Glutamine amide. The short motif at 63–66 (REDS) is the Inverted processing quadruplet motif 1 element. The propeptide occupies 63 to 71 (REDSEDAGR). The Processing quadruplet motif 2 motif lies at 68 to 71 (DAGR). Q89 is modified (glutamine amide). Residues 91 to 94 (REDT) carry the Inverted processing quadruplet motif 2 motif. Positions 91-99 (REDTEEAGR) are excised as a propeptide. Positions 96-99 (EAGR) match the Processing quadruplet motif 3 motif. Q117 carries the glutamine amide modification. The short motif at 119–122 (REDS) is the Inverted processing quadruplet motif 3 element. The propeptide occupies 119-127 (REDSEEAGR). Positions 124-127 (EAGR) match the Processing quadruplet motif 4 motif. Q145 carries the glutamine amide modification. An Inverted processing quadruplet motif 4 motif is present at residues 147 to 150 (REDT). The propeptide occupies 147-154 (REDTEEAR). A Processing quadruplet motif 5 motif is present at residues 151–154 (EEAR). The residue at position 178 (F178) is a Phenylalanine amide.

The protein belongs to the cationic peptide 03 (latarcin) family. 04 subfamily. In terms of processing, cleavage of the propeptide depends on the processing quadruplet motif (PQM) (XXXR, with at least one of X being E) and the inverted PQM (RXXX, with at least one of X being E). As to expression, expressed by the venom gland.

The protein resides in the secreted. Its function is as follows. M-zodatoxin-Lt4b: Has antimicrobial activity against Gram-positive bacteria (A.globiformis VKM Ac-1112 (MIC=0.3 uM), and B.subtilis VKM B-501 (MIC=1.1 uM)), Gram-negative bacteria (E.coli DH5-alpha (MIC=4.4 uM), E.coli MH1 (MIC=4.4 uM), and P.aeruginosa PAO1 (MIC=&gt;35 uM)), and yeasts (P.pastoris GS115 (MIC=&gt;35 uM), and S.cerevisiae Y190 (MIC=35 uM)). Does not have hemolytic activity against rabbit erythrocytes. Causes paralysis, but is not lethal when injected into insect (M.domestica) larvae. Shows no antimicrobial activity against Gram-positive bacterium B.subtilis B-501 or Gram-negative bacterium E.coli DH5-alpha at concentration up to 20 uM. In Lachesana tarabaevi (Spider), this protein is M-zodatoxin-Lt4b.